Here is a 606-residue protein sequence, read N- to C-terminus: Probable translation initiation factor IF-2 (606 aa).

Positions 11–230 (IRQPIVVVLG…LTGLVQRFMK (220 aa)) constitute a tr-type G domain. A G1 region spans residues 20–27 (GHVDHGKT). 20–27 (GHVDHGKT) is a GTP binding site. The G2 stretch occupies residues 45–49 (EITQH). Positions 85 to 88 (DTPG) are G3. GTP is bound by residues 85-89 (DTPGH) and 139-142 (NKID). The segment at 139-142 (NKID) is G4. Residues 207-209 (SAK) form a G5 region.

The protein belongs to the TRAFAC class translation factor GTPase superfamily. Classic translation factor GTPase family. IF-2 subfamily.

In terms of biological role, function in general translation initiation by promoting the binding of the formylmethionine-tRNA to ribosomes. Seems to function along with eIF-2. In Staphylothermus marinus (strain ATCC 43588 / DSM 3639 / JCM 9404 / F1), this protein is Probable translation initiation factor IF-2.